The sequence spans 728 residues: Ankyrin repeat protein A (728 aa).

5 ANK repeats span residues I381–Y410, N429–A458, T477–R506, Y525–Q554, and A573–N602.

Belongs to the Toxin_15 family.

This is Ankyrin repeat protein A (arpA) from Escherichia coli (strain K12).